Here is a 497-residue protein sequence, read N- to C-terminus: Lysine--tRNA ligase (497 aa).

Residues Glu405 and Glu412 each contribute to the Mg(2+) site.

The protein belongs to the class-II aminoacyl-tRNA synthetase family. In terms of assembly, homodimer. Requires Mg(2+) as cofactor.

Its subcellular location is the cytoplasm. It catalyses the reaction tRNA(Lys) + L-lysine + ATP = L-lysyl-tRNA(Lys) + AMP + diphosphate. In Gloeobacter violaceus (strain ATCC 29082 / PCC 7421), this protein is Lysine--tRNA ligase.